We begin with the raw amino-acid sequence, 393 residues long: Formate-dependent phosphoribosylglycinamide formyltransferase (393 aa).

Residues 22–23 and Glu82 contribute to the N(1)-(5-phospho-beta-D-ribosyl)glycinamide site; that span reads EL. ATP contacts are provided by residues Arg114, Lys155, 160–165, 195–198, and Glu203; these read SSGHGQ and EGFI. The ATP-grasp domain occupies 119-308; it reads RLAAEELGLK…QFALHARAIL (190 aa). Positions 267 and 279 each coordinate Mg(2+). Residues Asp286, Lys356, and 363-364 contribute to the N(1)-(5-phospho-beta-D-ribosyl)glycinamide site; that span reads RR.

Belongs to the PurK/PurT family. As to quaternary structure, homodimer.

The catalysed reaction is N(1)-(5-phospho-beta-D-ribosyl)glycinamide + formate + ATP = N(2)-formyl-N(1)-(5-phospho-beta-D-ribosyl)glycinamide + ADP + phosphate + H(+). It participates in purine metabolism; IMP biosynthesis via de novo pathway; N(2)-formyl-N(1)-(5-phospho-D-ribosyl)glycinamide from N(1)-(5-phospho-D-ribosyl)glycinamide (formate route): step 1/1. Its function is as follows. Involved in the de novo purine biosynthesis. Catalyzes the transfer of formate to 5-phospho-ribosyl-glycinamide (GAR), producing 5-phospho-ribosyl-N-formylglycinamide (FGAR). Formate is provided by PurU via hydrolysis of 10-formyl-tetrahydrofolate. The chain is Formate-dependent phosphoribosylglycinamide formyltransferase from Actinobacillus pleuropneumoniae serotype 5b (strain L20).